Reading from the N-terminus, the 312-residue chain is Very-long-chain 3-oxoacyl-CoA reductase (312 aa).

A helical transmembrane segment spans residues 4–24 (ALPAAGFLYWVGASTVAYLAL). 50–79 (GEWAVVTGGTDGIGKSYAEELAKRGMKIVL) contributes to the NADP(+) binding site. The next 2 membrane-spanning stretches (helical) occupy residues 182–202 (GAIL…LTIY) and 271–291 (GYPI…WLYF). A substrate-binding site is contributed by Ser-189. The active-site Proton acceptor is Tyr-202. The Di-lysine motif motif lies at 308–312 (KMKMN).

This sequence belongs to the short-chain dehydrogenases/reductases (SDR) family. 17-beta-HSD 3 subfamily.

The protein localises to the endoplasmic reticulum membrane. The catalysed reaction is a very-long-chain (3R)-3-hydroxyacyl-CoA + NADP(+) = a very-long-chain 3-oxoacyl-CoA + NADPH + H(+). The enzyme catalyses 17beta-estradiol + NAD(+) = estrone + NADH + H(+). It carries out the reaction 17beta-estradiol + NADP(+) = estrone + NADPH + H(+). It catalyses the reaction 3-oxooctadecanoyl-CoA + NADPH + H(+) = (3R)-hydroxyoctadecanoyl-CoA + NADP(+). The catalysed reaction is (7Z,10Z,13Z,16Z)-3-oxodocosatetraenoyl-CoA + NADPH + H(+) = (3R)-hydroxy-(7Z,10Z,13Z,16Z)-docosatetraenoyl-CoA + NADP(+). The enzyme catalyses 3-oxo-(7Z,10Z,13Z,16Z,19Z)-docosapentaenoyl-CoA + NADPH + H(+) = (3R)-hydroxy-(7Z,10Z,13Z,16Z,19Z)-docosapentaenoyl-CoA + NADP(+). It carries out the reaction (8Z,11Z,14Z)-3-oxoeicosatrienoyl-CoA + NADPH + H(+) = (3R)-hydroxy-(8Z,11Z,14Z)-eicosatrienoyl-CoA + NADP(+). The protein operates within lipid metabolism; fatty acid biosynthesis. Its pathway is steroid biosynthesis; estrogen biosynthesis. In terms of biological role, catalyzes the second of the four reactions of the long-chain fatty acids elongation cycle. This endoplasmic reticulum-bound enzymatic process, allows the addition of two carbons to the chain of long- and very long-chain fatty acids/VLCFAs per cycle. This enzyme has a 3-ketoacyl-CoA reductase activity, reducing 3-ketoacyl-CoA to 3-hydroxyacyl-CoA, within each cycle of fatty acid elongation. Thereby, it may participate in the production of VLCFAs of different chain lengths that are involved in multiple biological processes as precursors of membrane lipids and lipid mediators. May also catalyze the transformation of estrone (E1) into estradiol (E2) and play a role in estrogen formation. The chain is Very-long-chain 3-oxoacyl-CoA reductase (HSD17B12) from Bos taurus (Bovine).